Consider the following 258-residue polypeptide: Acetylglutamate kinase (258 aa).

Substrate contacts are provided by residues Gly44–Gly45, Arg66, and Asn158. ATP-binding positions include Asp181–Leu186 and Ile209–Thr211.

This sequence belongs to the acetylglutamate kinase family. ArgB subfamily. In terms of assembly, homodimer.

It is found in the cytoplasm. It catalyses the reaction N-acetyl-L-glutamate + ATP = N-acetyl-L-glutamyl 5-phosphate + ADP. It participates in amino-acid biosynthesis; L-arginine biosynthesis; N(2)-acetyl-L-ornithine from L-glutamate: step 2/4. Its function is as follows. Catalyzes the ATP-dependent phosphorylation of N-acetyl-L-glutamate. This Salmonella arizonae (strain ATCC BAA-731 / CDC346-86 / RSK2980) protein is Acetylglutamate kinase.